The sequence spans 61 residues: Conotoxin Cal14.6 (61 aa).

Residues 1–21 form the signal peptide; it reads MKFLLFLSVALLLTSFIETEA. The propeptide occupies 22 to 38; sequence GPVNEAGVERLFRALVG. At proline 57 the chain carries 4-hydroxyproline; partial. Proline 60 carries the proline amide modification.

In terms of processing, contains 2 disulfide bonds. Expressed by the venom duct.

It localises to the secreted. In terms of biological role, probable neurotoxin with unknown target. Possibly targets ion channels. This is Conotoxin Cal14.6 from Californiconus californicus (California cone).